The sequence spans 347 residues: Putative adhesin P1-like protein MPN_099 (347 aa).

The span at 282 to 300 shows a compositional bias: polar residues; sequence FGTDHSTQPQPQSLKTTTP. Residues 282–302 form a disordered region; the sequence is FGTDHSTQPQPQSLKTTTPVF.

Belongs to the adhesin P1 family.

This is Putative adhesin P1-like protein MPN_099 from Mycoplasma pneumoniae (strain ATCC 29342 / M129 / Subtype 1) (Mycoplasmoides pneumoniae).